The primary structure comprises 390 residues: Protein phosphatase 1B (390 aa).

Over residues 1 to 14 the composition is skewed to basic and acidic residues; the sequence is MGAFLDKPKTEKHN. The interval 1–20 is disordered; sequence MGAFLDKPKTEKHNAHGAGN. A lipid anchor (N-myristoyl glycine) is attached at glycine 2. Residue lysine 12 forms a Glycyl lysine isopeptide (Lys-Gly) (interchain with G-Cter in ISG15) linkage. A PPM-type phosphatase domain is found at 23–295; that stretch reads RYGLSSMQGW…DNMSVVLVCF (273 aa). Mn(2+) contacts are provided by aspartate 60, glycine 61, aspartate 243, and aspartate 286. The tract at residues 371 to 390 is disordered; that stretch reads NPHKDNDGGAGDLEDSLVAL. Serine 386 bears the Phosphoserine mark.

It belongs to the PP2C family. Monomer. Interacts with PAK6. Interacts with the phosphorylated form of IKBKB/IKKB. Mg(2+) is required as a cofactor. It depends on Mn(2+) as a cofactor. Isgylation negatively regulates its activity. Post-translationally, N-myristoylation is essential for the recognition of its substrates for dephosphorylation. As to expression, isoform 1: Expressed ubiquitously. Isoform 2: Expressed exclusively in testis and intestine. Isoform 3: Expressed exclusively in brain and intestine. Isoform 4: Expressed exclusively in testis and intestine.

The protein resides in the cytoplasm. It localises to the cytosol. The protein localises to the membrane. The catalysed reaction is O-phospho-L-seryl-[protein] + H2O = L-seryl-[protein] + phosphate. It carries out the reaction O-phospho-L-threonyl-[protein] + H2O = L-threonyl-[protein] + phosphate. In terms of biological role, enzyme with a broad specificity. Dephosphorylates PRKAA1 and PRKAA2. Inhibits TBK1-mediated antiviral signaling by dephosphorylating it at 'Ser-172'. Plays an important role in the termination of TNF-alpha-mediated NF-kappa-B activation through dephosphorylating and inactivating IKBKB/IKKB. This is Protein phosphatase 1B (Ppm1b) from Mus musculus (Mouse).